The sequence spans 315 residues: Zinc metalloproteinase nas-4 (315 aa).

Positions 1-20 (MMTIQRYSLVFCAIFATCWT) are cleaved as a signal peptide. Residue N71 is glycosylated (N-linked (GlcNAc...) asparagine). Residues 95–290 (NAIKQIYRRW…RKINKLYNCP (196 aa)) form the Peptidase M12A domain. Disulfide bonds link C137–C289 and C160–C179. H187 is a binding site for Zn(2+). E188 is a catalytic residue. 2 residues coordinate Zn(2+): H191 and H197. The tract at residues 291–315 (GVSGNNNNNNNNQINSNSIVNHPQV) is disordered.

It depends on Zn(2+) as a cofactor. In terms of tissue distribution, digestive tract. Found in the pharynx cells of the procorpus, metacorpus, isthmus and terminal bulb, and in the terminal bulb lumen.

Its subcellular location is the secreted. Metalloprotease. May be involved in digestion. This is Zinc metalloproteinase nas-4 (nas-4) from Caenorhabditis elegans.